We begin with the raw amino-acid sequence, 270 residues long: Cell division protein DivIB (270 aa).

The Cytoplasmic portion of the chain corresponds to 1 to 28 (MAENKRVISIENRIPELKKYRKKKLVRH). The helical transmembrane segment at 29-49 (LAILIGIFVILIAITLYFLSP) threads the bilayer. The Extracellular portion of the chain corresponds to 50-270 (LSKLDKIAVS…AAKEKKETNE (221 aa)). Residues 51-119 (SKLDKIAVSG…NDVQINITEF (69 aa)) form the POTRA domain.

This sequence belongs to the FtsQ/DivIB family. DivIB subfamily.

The protein localises to the cell membrane. Functionally, cell division protein that may be involved in stabilizing or promoting the assembly of the division complex. This Listeria monocytogenes serovar 1/2a (strain ATCC BAA-679 / EGD-e) protein is Cell division protein DivIB.